The primary structure comprises 456 residues: Asparagine--tRNA ligase (456 aa).

Belongs to the class-II aminoacyl-tRNA synthetase family. In terms of assembly, homodimer.

Its subcellular location is the cytoplasm. It catalyses the reaction tRNA(Asn) + L-asparagine + ATP = L-asparaginyl-tRNA(Asn) + AMP + diphosphate + H(+). The polypeptide is Asparagine--tRNA ligase (Mycoplasmoides gallisepticum (strain R(low / passage 15 / clone 2)) (Mycoplasma gallisepticum)).